Here is a 716-residue protein sequence, read N- to C-terminus: Phenylalanine/tyrosine ammonia-lyase (716 aa).

Tyr-110 acts as the Proton donor/acceptor in catalysis. The segment at residues 211–213 (ASG) is a cross-link (5-imidazolinone (Ala-Gly)). 2,3-didehydroalanine (Ser) is present on Ser-212. 7 residues coordinate (E)-cinnamate: Asn-270, Gln-360, Arg-366, Asn-397, Lys-468, Glu-496, and Asn-499.

Belongs to the PAL/histidase family. Homotetramer. Dimer of dimers. In terms of processing, contains an active site 4-methylidene-imidazol-5-one (MIO), which is formed autocatalytically by cyclization and dehydration of residues Ala-Ser-Gly.

Its subcellular location is the cytoplasm. The catalysed reaction is L-phenylalanine = (E)-cinnamate + NH4(+). The enzyme catalyses L-tyrosine = (E)-4-coumarate + NH4(+). It participates in phenylpropanoid metabolism; trans-cinnamate biosynthesis; trans-cinnamate from L-phenylalanine: step 1/1. In terms of biological role, catalyzes the non-oxidative deamination of L-phenylalanine and L-tyrosine to form trans-cinnamic acid and p-coumaric acid respectively with similar efficiencies. Facilitates the commitment step in phenylpropanoid pathways that produce secondary metabolites such as lignins, coumarins and flavonoids. This is Phenylalanine/tyrosine ammonia-lyase (PAL) from Rhodotorula toruloides (Yeast).